Consider the following 429-residue polypeptide: MTDANHLLDPSGALPQTRPPWTSRDSLRITRVRAIVTAPEGQPLVVVRVDTSDDGLYGLGCATFTQRYAAVAAAVDEHVGPLAVGRHPADIEDITRLIHYSSYWRSGPVLNNALSGLDQALWDIAGKRAGMPVYELLGGRSRSAVEVYSHAAGGTIEATLDQAEELLAEGYRNVRLQLGGPGLGTYGAPGTLGGYPRSPHPDGWAVEQYLRDAPRLFAAARERLGDSVNLMHDVHSRLTPKQAVVLARALEPYRLSFLEDVIAPELYDRLPEVRAASPVPIAVGEQIGSVPDAVRLVRDGGVDLLRLHTSAVGGLTPTRKIVALCELLGVRTAFHSPADVSPVGVAANLAVDISTPAFGYQESHTYNDATHEVFPGTRVVREGHLYPAEEPGWGIEIDERAAAKFPPVKFLHERWSSGVRRPDGGLEAP.

Residues 1 to 22 (MTDANHLLDPSGALPQTRPPWT) form a disordered region. Mg(2+) is bound at residue aspartate 233. Histidine 235 is a binding site for D-arabinonate. The Mg(2+) site is built by glutamate 259 and glutamate 285. Residues glutamate 285, arginine 306, histidine 335, and glutamate 362 each coordinate D-arabinonate.

It belongs to the mandelate racemase/muconate lactonizing enzyme family. GalD subfamily.

In terms of biological role, has no detectable activity with D-mannonate and with a panel of 70 other acid sugars (in vitro), in spite of the conservation of the residues that are expected to be important for catalytic activity and cofactor binding. May have evolved a divergent function. The chain is D-galactonate dehydratase family member Caci_4410 from Catenulispora acidiphila (strain DSM 44928 / JCM 14897 / NBRC 102108 / NRRL B-24433 / ID139908).